Reading from the N-terminus, the 1079-residue chain is Psi-producing oxygenase A (1079 aa).

Positions 105-446 are linoleate 8R-lipoxygenase; sequence TNTFLTTLWN…DGSYDDNDLV (342 aa). His202 contacts heme b. The active site involves Tyr374. His377 is a binding site for heme b. Positions 654–1079 are 9,12-octadecadienoate 8-hydroperoxide 8R-isomerase; sequence QFINSHSACM…WDGDLPEVKE (426 aa).

The protein belongs to the peroxidase family. As to quaternary structure, homotetramer. Requires heme b as cofactor.

The catalysed reaction is (9Z,12Z)-octadecadienoate + O2 = (8R,9Z,12Z)-8-hydroperoxyoctadeca-9,12-dienoate. It catalyses the reaction (8R,9Z,12Z)-8-hydroperoxyoctadeca-9,12-dienoate = (5S,8R,9Z,12Z)-5,8-dihydroxyoctadeca-9,12-dienoate. Its function is as follows. Bifunctional heme-containing enzyme that oxidizes linoleic acid to (8R,9Z,12Z)-8-hydroperoxyoctadeca-9,12-dienoate (within the N-terminal heme peroxidase domain), which is subsequently isomerized to (5S,8R,9Z,12Z)-5,8-dihydroxyoctadeca-9,12-dienoate (within the C-terminal P450 heme thiolate domain). Oxidized unsaturated fatty acids, so-called oxylipins, derived from endogenous fatty acids, influence the development of the asexual conidiophores and sexual cleistothecia and regulate the secondary metabolism. These substances were collectively named psi factors and are primarily a mixture of hydroxylated oleic, linoleic and alpha-linolenic acids. They are termed psi-beta, psi-alpha, and psi-gamma, respectively. Oxylipins may also serve as activators of mammalian immune responses contributing to enhanced resistance to opportunistic fungi and as factors that modulate fungal development contributing to resistance to host defenses. The sequence is that of Psi-producing oxygenase A (ppoA) from Aspergillus fumigatus (strain ATCC MYA-4609 / CBS 101355 / FGSC A1100 / Af293) (Neosartorya fumigata).